Here is a 142-residue protein sequence, read N- to C-terminus: Hemoglobin subunit alpha (142 aa).

The 141-residue stretch at 2–142 (VLSGEDKSNI…VSTVLTSKYR (141 aa)) folds into the Globin domain. Phosphoserine is present on Ser4. N6-succinyllysine is present on residues Lys8 and Lys12. An N6-acetyllysine; alternate modification is found at Lys17. Position 17 is an N6-succinyllysine; alternate (Lys17). Tyr25 carries the post-translational modification Phosphotyrosine. At Ser36 the chain carries Phosphoserine. The residue at position 41 (Lys41) is an N6-succinyllysine. Phosphoserine is present on Ser50. Position 59 (His59) interacts with O2. Residue His88 coordinates heme b. Residue Ser103 is modified to Phosphoserine. Thr109 is subject to Phosphothreonine. Phosphoserine is present on residues Ser112, Ser125, and Ser132. 2 positions are modified to phosphothreonine: Thr135 and Thr138. Ser139 is subject to Phosphoserine.

The protein belongs to the globin family. Heterotetramer of two alpha chains and two beta chains. In terms of tissue distribution, red blood cells.

Functionally, involved in oxygen transport from the lung to the various peripheral tissues. In terms of biological role, hemopressin acts as an antagonist peptide of the cannabinoid receptor CNR1. Hemopressin-binding efficiently blocks cannabinoid receptor CNR1 and subsequent signaling. The chain is Hemoglobin subunit alpha (Hba) from Mus musculus (Mouse).